The sequence spans 295 residues: Ribosomal protein L11 methyltransferase (295 aa).

Residues Thr-146, Gly-167, Asp-189, and Asn-231 each contribute to the S-adenosyl-L-methionine site.

This sequence belongs to the methyltransferase superfamily. PrmA family.

Its subcellular location is the cytoplasm. The enzyme catalyses L-lysyl-[protein] + 3 S-adenosyl-L-methionine = N(6),N(6),N(6)-trimethyl-L-lysyl-[protein] + 3 S-adenosyl-L-homocysteine + 3 H(+). Methylates ribosomal protein L11. This is Ribosomal protein L11 methyltransferase from Vibrio parahaemolyticus serotype O3:K6 (strain RIMD 2210633).